Here is a 244-residue protein sequence, read N- to C-terminus: Putative quercetin 2,3-dioxygenase Mb0187c (244 aa).

The a divalent metal cation site is built by H60, H62, H104, and E106.

It belongs to the pirin family. A divalent metal cation is required as a cofactor.

It carries out the reaction quercetin + O2 = 2-(3,4-dihydroxybenzoyloxy)-4,6-dihydroxybenzoate + CO. It functions in the pathway flavonoid metabolism; quercetin degradation. In terms of biological role, putative quercetin 2,3-dioxygenase. The chain is Putative quercetin 2,3-dioxygenase Mb0187c from Mycobacterium bovis (strain ATCC BAA-935 / AF2122/97).